The sequence spans 600 residues: Aspartate--tRNA(Asp/Asn) ligase (600 aa).

E187 contacts L-aspartate. Residues 211–214 (QIFK) form an aspartate region. The L-aspartate site is built by R233 and H463. 233 to 235 (RDE) serves as a coordination point for ATP. E497 serves as a coordination point for ATP. R504 is a binding site for L-aspartate. 549–552 (GVDR) provides a ligand contact to ATP.

This sequence belongs to the class-II aminoacyl-tRNA synthetase family. Type 1 subfamily. In terms of assembly, homodimer.

It localises to the cytoplasm. The catalysed reaction is tRNA(Asx) + L-aspartate + ATP = L-aspartyl-tRNA(Asx) + AMP + diphosphate. In terms of biological role, aspartyl-tRNA synthetase with relaxed tRNA specificity since it is able to aspartylate not only its cognate tRNA(Asp) but also tRNA(Asn). Reaction proceeds in two steps: L-aspartate is first activated by ATP to form Asp-AMP and then transferred to the acceptor end of tRNA(Asp/Asn). The chain is Aspartate--tRNA(Asp/Asn) ligase from Wolbachia sp. subsp. Drosophila simulans (strain wRi).